Consider the following 346-residue polypeptide: Eukaryotic translation initiation factor 3 subunit I (346 aa).

WD repeat units lie at residues 8-47 (GHER…RLGT), 50-89 (GHNG…IAHS), 150-189 (EGCA…CLEI), 192-233 (LHKQ…KTYE), and 289-328 (DHFG…FDFK).

The protein belongs to the eIF-3 subunit I family. In terms of assembly, component of the eukaryotic translation initiation factor 3 (eIF-3) complex.

The protein localises to the cytoplasm. Its function is as follows. Component of the eukaryotic translation initiation factor 3 (eIF-3) complex, which is involved in protein synthesis of a specialized repertoire of mRNAs and, together with other initiation factors, stimulates binding of mRNA and methionyl-tRNAi to the 40S ribosome. The eIF-3 complex specifically targets and initiates translation of a subset of mRNAs involved in cell proliferation. The protein is Eukaryotic translation initiation factor 3 subunit I of Eremothecium gossypii (strain ATCC 10895 / CBS 109.51 / FGSC 9923 / NRRL Y-1056) (Yeast).